The following is a 585-amino-acid chain: Pentatricopeptide repeat-containing protein At4g21170 (585 aa).

12 PPR repeats span residues Leu-152–Pro-186, Ser-187–Ser-221, Asp-222–Glu-247, Ser-252–Leu-286, Ser-287–Thr-321, Asp-324–Arg-358, Trp-360–Val-394, Asp-396–Pro-431, Cys-432–Phe-466, Asp-467–Leu-501, Asp-502–Ile-534, and Asn-538–Pro-572.

It belongs to the PPR family. P subfamily.

This Arabidopsis thaliana (Mouse-ear cress) protein is Pentatricopeptide repeat-containing protein At4g21170.